A 98-amino-acid chain; its full sequence is Large ribosomal subunit protein eL21 (98 aa).

The segment at 1–22 (MVQMSEGFRRKTRKKLSKHPRE) is disordered. Residues 10-21 (RKTRKKLSKHPR) show a composition bias toward basic residues.

This sequence belongs to the eukaryotic ribosomal protein eL21 family.

In Methanocaldococcus jannaschii (strain ATCC 43067 / DSM 2661 / JAL-1 / JCM 10045 / NBRC 100440) (Methanococcus jannaschii), this protein is Large ribosomal subunit protein eL21 (rpl21e).